Consider the following 721-residue polypeptide: Polyribonucleotide nucleotidyltransferase (721 aa).

Residues Asp511 and Asp517 each contribute to the Mg(2+) site. The KH domain maps to 577 to 637 (PSTDFFHINP…SGVQAAREHI (61 aa)). In terms of domain architecture, S1 motif spans 654 to 721 (GDIHKGIVKK…KGNKISLGIA (68 aa)).

The protein belongs to the polyribonucleotide nucleotidyltransferase family. It depends on Mg(2+) as a cofactor.

It localises to the cytoplasm. It carries out the reaction RNA(n+1) + phosphate = RNA(n) + a ribonucleoside 5'-diphosphate. Functionally, involved in mRNA degradation. Catalyzes the phosphorolysis of single-stranded polyribonucleotides processively in the 3'- to 5'-direction. The sequence is that of Polyribonucleotide nucleotidyltransferase from Sulfurimonas denitrificans (strain ATCC 33889 / DSM 1251) (Thiomicrospira denitrificans (strain ATCC 33889 / DSM 1251)).